The sequence spans 487 residues: MPMSLNQLFPQAERDLLIRELTLDSRGVRPGDLFLAVPGGRQDGRAHIADALAKGAAAVAYEAEGAGELPPSDAPLIAVKGLAAQLSAVAGRFYGEPSRGLDLIGVTGTNGKTSVSQLVAQALDLLGERCGIVGTLGTGFYGALESGRHTTPDPLAVQATLATLKQAGARAVAMEVSSHGLDQGRVAALGFDIAVFTNLSRDHLDYHGSMEAYAAAKAKLFAWPGLRCRVINLDDDFGRRLAGEEQDSELITYSLTDSSAFLYCREARFGDAGIEAALVTPHGEGLLRSPLLGRFNLSNLLAAVGALLGLGYPLGDILRTLPQLQGPVGRMQRLGGGDKPLVVVDYAHTPDALEKVLEALRPHAAARLLCLFGCGGDRDAGKRPLMAAIAERLADEVLVTDDNPRTEASAAIIADIRKGFAAADKVTFLPSRGEAIAHLIASAAVDDVVLLAGKGHEDYQEIDGVRHPFSDIEQAERALAAWEVPHA.

The UDP-N-acetyl-alpha-D-muramoyl-L-alanyl-D-glutamate site is built by Leu-23 and Ser-25. 108–114 (GTNGKTS) lines the ATP pocket. UDP-N-acetyl-alpha-D-muramoyl-L-alanyl-D-glutamate is bound by residues 150–151 (TT), Ser-177, Gln-183, and Arg-185. Lys-217 carries the N6-carboxylysine modification. Meso-2,6-diaminopimelate-binding positions include Arg-378, 402–405 (DNPR), Gly-453, and Glu-457. Positions 402-405 (DNPR) match the Meso-diaminopimelate recognition motif motif.

Belongs to the MurCDEF family. MurE subfamily. It depends on Mg(2+) as a cofactor. Post-translationally, carboxylation is probably crucial for Mg(2+) binding and, consequently, for the gamma-phosphate positioning of ATP.

It is found in the cytoplasm. The catalysed reaction is UDP-N-acetyl-alpha-D-muramoyl-L-alanyl-D-glutamate + meso-2,6-diaminopimelate + ATP = UDP-N-acetyl-alpha-D-muramoyl-L-alanyl-gamma-D-glutamyl-meso-2,6-diaminopimelate + ADP + phosphate + H(+). The protein operates within cell wall biogenesis; peptidoglycan biosynthesis. Catalyzes the addition of meso-diaminopimelic acid to the nucleotide precursor UDP-N-acetylmuramoyl-L-alanyl-D-glutamate (UMAG) in the biosynthesis of bacterial cell-wall peptidoglycan. This chain is UDP-N-acetylmuramoyl-L-alanyl-D-glutamate--2,6-diaminopimelate ligase, found in Pseudomonas aeruginosa (strain ATCC 15692 / DSM 22644 / CIP 104116 / JCM 14847 / LMG 12228 / 1C / PRS 101 / PAO1).